We begin with the raw amino-acid sequence, 1090 residues long: Leucine--tRNA ligase, cytoplasmic (1090 aa).

Serine 2 is modified (N-acetylserine). The 'HIGH' region signature appears at 66-76 (PYMNGVMHAGH). Residue threonine 142 is modified to Phosphothreonine. The short motif at 729–733 (KMSKS) is the 'KMSKS' region element. Lysine 732 serves as a coordination point for ATP.

It belongs to the class-I aminoacyl-tRNA synthetase family.

The protein localises to the cytoplasm. It catalyses the reaction tRNA(Leu) + L-leucine + ATP = L-leucyl-tRNA(Leu) + AMP + diphosphate. The chain is Leucine--tRNA ligase, cytoplasmic (CDC60) from Saccharomyces cerevisiae (strain ATCC 204508 / S288c) (Baker's yeast).